An 82-amino-acid polypeptide reads, in one-letter code: Small ribosomal subunit protein bS16 (82 aa).

It belongs to the bacterial ribosomal protein bS16 family.

This chain is Small ribosomal subunit protein bS16, found in Histophilus somni (strain 2336) (Haemophilus somnus).